Consider the following 385-residue polypeptide: ATP phosphoribosyltransferase regulatory subunit (385 aa).

Belongs to the class-II aminoacyl-tRNA synthetase family. HisZ subfamily. In terms of assembly, heteromultimer composed of HisG and HisZ subunits.

It localises to the cytoplasm. It functions in the pathway amino-acid biosynthesis; L-histidine biosynthesis; L-histidine from 5-phospho-alpha-D-ribose 1-diphosphate: step 1/9. Functionally, required for the first step of histidine biosynthesis. May allow the feedback regulation of ATP phosphoribosyltransferase activity by histidine. In Lysinibacillus sphaericus (strain C3-41), this protein is ATP phosphoribosyltransferase regulatory subunit.